Consider the following 159-residue polypeptide: Putative ribosomal RNA large subunit methyltransferase H (159 aa).

S-adenosyl-L-methionine-binding positions include Leu76, Gly108, and 127-132; that span reads LSPLTF.

Belongs to the RNA methyltransferase RlmH family.

The protein resides in the cytoplasm. It catalyses the reaction pseudouridine(1915) in 23S rRNA + S-adenosyl-L-methionine = N(3)-methylpseudouridine(1915) in 23S rRNA + S-adenosyl-L-homocysteine + H(+). Specifically methylates the pseudouridine at position 1915 (m3Psi1915) in 23S rRNA. This chain is Putative ribosomal RNA large subunit methyltransferase H, found in Methanoregula boonei (strain DSM 21154 / JCM 14090 / 6A8).